Reading from the N-terminus, the 711-residue chain is DNA topoisomerase 3 (711 aa).

The 134-residue stretch at 2 to 135 (KSLILAEKPS…IKRLWISSVT (134 aa)) folds into the Toprim domain. Positions 8 and 104 each coordinate Mg(2+). The Topo IA-type catalytic domain occupies 152–580 (FQHLYEAALA…EMKAFTQSIV (429 aa)). The tract at residues 186–191 (SLGRVQ) is interaction with DNA. Residue Y305 is the O-(5'-phospho-DNA)-tyrosine intermediate of the active site. Residues 672-699 (KRFKNKSSGKVSKKEMKKYMNNEDSLEN) form a disordered region. The segment covering 683–692 (SKKEMKKYMN) has biased composition (basic and acidic residues).

The protein belongs to the type IA topoisomerase family. Mg(2+) is required as a cofactor.

It catalyses the reaction ATP-independent breakage of single-stranded DNA, followed by passage and rejoining.. Functionally, releases the supercoiling and torsional tension of DNA, which is introduced during the DNA replication and transcription, by transiently cleaving and rejoining one strand of the DNA duplex. Introduces a single-strand break via transesterification at a target site in duplex DNA. The scissile phosphodiester is attacked by the catalytic tyrosine of the enzyme, resulting in the formation of a DNA-(5'-phosphotyrosyl)-enzyme intermediate and the expulsion of a 3'-OH DNA strand. The free DNA strand then undergoes passage around the unbroken strand, thus removing DNA supercoils. Finally, in the religation step, the DNA 3'-OH attacks the covalent intermediate to expel the active-site tyrosine and restore the DNA phosphodiester backbone. This chain is DNA topoisomerase 3, found in Staphylococcus haemolyticus (strain JCSC1435).